Here is a 637-residue protein sequence, read N- to C-terminus: Chaperone protein dnaK2 (637 aa).

Position 197 is a phosphothreonine; by autocatalysis (Thr-197). Positions Ala-602–Lys-637 are disordered. Residues Ala-603–Asp-623 show a composition bias toward gly residues. Residues Ala-624–Lys-637 are compositionally biased toward acidic residues.

It belongs to the heat shock protein 70 family.

Functionally, acts as a chaperone. In Parasynechococcus marenigrum (strain WH8102), this protein is Chaperone protein dnaK2 (dnaK2).